A 432-amino-acid chain; its full sequence is Adenylosuccinate synthetase (432 aa).

GTP is bound by residues 12–18 and 40–42; these read GDEGKGK and GHT. Catalysis depends on aspartate 13, which acts as the Proton acceptor. Mg(2+) is bound by residues aspartate 13 and glycine 40. IMP contacts are provided by residues 13 to 16, 38 to 41, threonine 128, arginine 142, glutamine 223, threonine 238, and arginine 302; these read DEGK and NAGH. Catalysis depends on histidine 41, which acts as the Proton donor. Substrate is bound at residue 298 to 304; sequence TTTGRPR. Residues arginine 304, 330–332, and 417–419 each bind GTP; these read HLD and GVG.

The protein belongs to the adenylosuccinate synthetase family. In terms of assembly, homodimer. Mg(2+) serves as cofactor.

The protein localises to the cytoplasm. It catalyses the reaction IMP + L-aspartate + GTP = N(6)-(1,2-dicarboxyethyl)-AMP + GDP + phosphate + 2 H(+). It participates in purine metabolism; AMP biosynthesis via de novo pathway; AMP from IMP: step 1/2. In terms of biological role, plays an important role in the de novo pathway of purine nucleotide biosynthesis. Catalyzes the first committed step in the biosynthesis of AMP from IMP. The chain is Adenylosuccinate synthetase from Symbiobacterium thermophilum (strain DSM 24528 / JCM 14929 / IAM 14863 / T).